Consider the following 344-residue polypeptide: BURP domain-containing protein 16 (344 aa).

The N-terminal stretch at 1–25 is a signal peptide; it reads MATSFLFSLILLLITALSLPFPLHA. N-linked (GlcNAc...) asparagine glycans are attached at residues Asn90, Asn120, Asn181, and Asn333. Residues 128–341 enclose the BURP domain; it reads FFREQELKEG…FNGSMTWVIA (214 aa).

In terms of tissue distribution, expressed in roots, stems, leaves and panicles.

The sequence is that of BURP domain-containing protein 16 (BURP16) from Oryza sativa subsp. japonica (Rice).